The chain runs to 481 residues: Cytochrome c oxidase subunit 1 (481 aa).

Residues 22-42 (ISYLWLAYWFGMIGFYMSVLI) traverse the membrane as a helical segment. Ca(2+)-binding residues include Glu-45 and Gly-50. Transmembrane regions (helical) follow at residues 64 to 84 (LLFTLHGLIMVFFNIMTGLFG), 109 to 129 (SLLFQPIGFVLVVSSIYLEIG), 151 to 171 (FIIFGLLAAGIASTLSSVNFI), 194 to 214 (IVLTSFLLLLSLPVVTAVFLM), 240 to 260 (LFWFFGHPEVYIMILPGFGII), 278 to 298 (MILAMGFNSFVRLFGLGTSYV), 309 to 329 (YFTTVTILIALPTGNKIFNWV), and 343 to 363 (LVLFTVLFIVNFVIGGTTGVV). Fe(II)-heme a is bound at residue His-69. Residue His-246 coordinates Cu cation. Residues 246-250 (HPEVY) constitute a cross-link (1'-histidyl-3'-tyrosine (His-Tyr)). Tyr-250 serves as a coordination point for O2. His-374 and Asp-375 together coordinate Mg(2+). A heme a3-binding site is contributed by His-382. The next 2 membrane-spanning stretches (helical) occupy residues 382–402 (HFHFVLSIGAIISMICFIIYI) and 420–440 (IAPIFMISVLLTFLPMHFTGF). Fe(II)-heme a is bound at residue His-384. Pro-448 contacts Ca(2+). A helical transmembrane segment spans residues 459–479 (FICTLGATMMLVLKLAILFII).

The protein belongs to the heme-copper respiratory oxidase family. As to quaternary structure, component of the cytochrome c oxidase (complex IV, CIV), a multisubunit enzyme composed of a catalytic core of 3 subunits and several supernumerary subunits. The complex exists as a monomer or a dimer and forms supercomplexes (SCs) in the inner mitochondrial membrane with ubiquinol-cytochrome c oxidoreductase (cytochrome b-c1 complex, complex III, CIII). Requires heme as cofactor. Cu cation is required as a cofactor.

The protein resides in the mitochondrion inner membrane. It carries out the reaction 4 Fe(II)-[cytochrome c] + O2 + 8 H(+)(in) = 4 Fe(III)-[cytochrome c] + 2 H2O + 4 H(+)(out). Its pathway is energy metabolism; oxidative phosphorylation. In terms of biological role, component of the cytochrome c oxidase, the last enzyme in the mitochondrial electron transport chain which drives oxidative phosphorylation. The respiratory chain contains 3 multisubunit complexes succinate dehydrogenase (complex II, CII), ubiquinol-cytochrome c oxidoreductase (cytochrome b-c1 complex, complex III, CIII) and cytochrome c oxidase (complex IV, CIV), that cooperate to transfer electrons derived from NADH and succinate to molecular oxygen, creating an electrochemical gradient over the inner membrane that drives transmembrane transport and the ATP synthase. Cytochrome c oxidase is the component of the respiratory chain that catalyzes the reduction of oxygen to water. Electrons originating from reduced cytochrome c in the intermembrane space (IMS) are transferred via the dinuclear copper A center (CU(A)) of subunit 2 and heme A of subunit 1 to the active site in subunit 1, a binuclear center (BNC) formed by heme A3 and copper B (CU(B)). The BNC reduces molecular oxygen to 2 water molecules using 4 electrons from cytochrome c in the IMS and 4 protons from the mitochondrial matrix. This Theileria parva (East coast fever infection agent) protein is Cytochrome c oxidase subunit 1 (MT-CO1).